The chain runs to 309 residues: Aspartate carbamoyltransferase catalytic subunit (309 aa).

Residues R55 and T56 each coordinate carbamoyl phosphate. L-aspartate is bound at residue K85. Carbamoyl phosphate is bound by residues R106, H135, and Q138. Residues R168 and R230 each contribute to the L-aspartate site. 2 residues coordinate carbamoyl phosphate: L268 and P269.

This sequence belongs to the aspartate/ornithine carbamoyltransferase superfamily. ATCase family. Heterododecamer (2C3:3R2) of six catalytic PyrB chains organized as two trimers (C3), and six regulatory PyrI chains organized as three dimers (R2).

It catalyses the reaction carbamoyl phosphate + L-aspartate = N-carbamoyl-L-aspartate + phosphate + H(+). The protein operates within pyrimidine metabolism; UMP biosynthesis via de novo pathway; (S)-dihydroorotate from bicarbonate: step 2/3. Catalyzes the condensation of carbamoyl phosphate and aspartate to form carbamoyl aspartate and inorganic phosphate, the committed step in the de novo pyrimidine nucleotide biosynthesis pathway. The polypeptide is Aspartate carbamoyltransferase catalytic subunit (Vibrio campbellii (strain ATCC BAA-1116)).